The primary structure comprises 721 residues: DNA ligase (721 aa).

NAD(+) is bound by residues 39 to 43, 89 to 90, and Glu-123; these read DAEYD and SL. The active-site N6-AMP-lysine intermediate is Lys-125. Residues Arg-146, Glu-186, Lys-302, and Lys-326 each contribute to the NAD(+) site. Positions 418, 421, 436, and 442 each coordinate Zn(2+). The tract at residues 556-588 is disordered; it reads QASSAAREGEPANADGAYDPATVTPDSDTAGAE. Residues 641 to 721 form the BRCT domain; that stretch reads TKDSAVAGKT…AWAEIVRQAG (81 aa).

This sequence belongs to the NAD-dependent DNA ligase family. LigA subfamily. Mg(2+) serves as cofactor. Requires Mn(2+) as cofactor.

The catalysed reaction is NAD(+) + (deoxyribonucleotide)n-3'-hydroxyl + 5'-phospho-(deoxyribonucleotide)m = (deoxyribonucleotide)n+m + AMP + beta-nicotinamide D-nucleotide.. In terms of biological role, DNA ligase that catalyzes the formation of phosphodiester linkages between 5'-phosphoryl and 3'-hydroxyl groups in double-stranded DNA using NAD as a coenzyme and as the energy source for the reaction. It is essential for DNA replication and repair of damaged DNA. The sequence is that of DNA ligase from Novosphingobium aromaticivorans (strain ATCC 700278 / DSM 12444 / CCUG 56034 / CIP 105152 / NBRC 16084 / F199).